The following is a 596-amino-acid chain: MSTHAILTIVLYVGVLLLLAYPLGGFIDAVMSGQSITSKKPFRFIENFIYKVCGIDPAIEMSWLSYAIGLIAFNILGVLFVFGLQLFQGILPLNPQGLVSVSPDSSFNTAISFATNTNWQAYVGEGTMSYLTQMLGLTTQNFLSAASGIVVVIALIRGFARNSIKTIGNLWVDLTRITLYVLVPISVVYAIFLVGQGSIQNFDAYKDVKTVEVAKFDAPKLDADGQPLKDEKGAVLTGPASTDQQTLPMGPVASQEAIKMLGTNGGGFFNANSAHPYENPTPLSNFIQILSIFLIPAALCFTFGRMVRDKRQGWVVLVTMILIFLTVTFAAVHFESQANPVLTNLGVDGAMGNMEGKETRFGIDDSSIFASITTLASCGAVNSMHDSFMPMGGFVPLWNMMLGEVVFGGVGTGLYGMLVFAILAVFIAGLMIGRTPEYLGKKIESYEMKMVAIAILVTPILALVGTAIAVMSVDGVAGIANPGAHGFSEILYAFTSAANNNGSAFAGLSANTPFYNSMLAIAMWFGRFGVIVPVLALAGAFAAKKKIAVNEGTMPTHGPLFIVLLAGTVILVGALNYVPALALGPIVEQLMLPVIH.

The next 10 membrane-spanning stretches (helical) occupy residues 6–26, 67–87, 136–156, 177–197, 283–303, 314–334, 413–433, 450–470, 518–538, and 560–580; these read ILTI…LGGF, AIGL…LQLF, GLTT…IALI, ITLY…VGQG, LSNF…CFTF, WVVL…AVHF, GLYG…LMIG, MVAI…AIAV, MLAI…LALA, and LFIV…YVPA.

It belongs to the KdpA family. In terms of assembly, the system is composed of three essential subunits: KdpA, KdpB and KdpC.

It localises to the cell inner membrane. Functionally, part of the high-affinity ATP-driven potassium transport (or Kdp) system, which catalyzes the hydrolysis of ATP coupled with the electrogenic transport of potassium into the cytoplasm. This subunit binds the periplasmic potassium ions and delivers the ions to the membrane domain of KdpB through an intramembrane tunnel. The sequence is that of Potassium-transporting ATPase potassium-binding subunit from Polynucleobacter asymbioticus (strain DSM 18221 / CIP 109841 / QLW-P1DMWA-1) (Polynucleobacter necessarius subsp. asymbioticus).